An 892-amino-acid polypeptide reads, in one-letter code: UPF0182 protein MCA2716 (892 aa).

A run of 7 helical transmembrane segments spans residues 7-27 (LLTS…AIVL), 57-77 (ILSG…FWAA), 107-127 (GALP…ALPF), 163-183 (ILVL…VMVA), 206-226 (IHLN…YVLQ), 252-272 (LPLI…ALWF), and 281-301 (LALT…IDVV).

The protein belongs to the UPF0182 family.

It is found in the cell membrane. The sequence is that of UPF0182 protein MCA2716 from Methylococcus capsulatus (strain ATCC 33009 / NCIMB 11132 / Bath).